Here is a 557-residue protein sequence, read N- to C-terminus: Potassium-transporting ATPase potassium-binding subunit (557 aa).

Transmembrane regions (helical) follow at residues 5–25 (GFLL…PLGS), 63–83 (LCAI…MLLG), 132–152 (GLTV…FALI), 170–190 (LLRI…LFFI), 253–273 (FVQM…FGEV), 283–303 (LLWA…WAEV), 329–349 (VLVS…AVIA), 356–376 (ALGG…FGGV), 379–399 (GLYG…LMIG), 416–436 (LTAL…ALAM), 484–504 (LLAF…MAIA), and 526–546 (LFVG…FIPA).

The protein belongs to the KdpA family. As to quaternary structure, the system is composed of three essential subunits: KdpA, KdpB and KdpC.

The protein resides in the cell inner membrane. In terms of biological role, part of the high-affinity ATP-driven potassium transport (or Kdp) system, which catalyzes the hydrolysis of ATP coupled with the electrogenic transport of potassium into the cytoplasm. This subunit binds the periplasmic potassium ions and delivers the ions to the membrane domain of KdpB through an intramembrane tunnel. The chain is Potassium-transporting ATPase potassium-binding subunit from Escherichia coli O139:H28 (strain E24377A / ETEC).